An 821-amino-acid polypeptide reads, in one-letter code: MSVSTSVVKSMLQLTNYFGSNFTPKTETISSLAELWERHGSMIASMMSCDTREFGTADKFYEVIFRKIATTSLSFMTDSLEPKLAASGDSLEICKFYALFLEYMRKDHSGMLTRALEQASSENRVDTAVLLDMFLFFDNVYSESTADDWWACLRRDDEDQEASSGFRTPKRNNYSLTSLQTPTATARRLRTASSTARRSPIAEAVDSPTMKFMRSERELKQSKARIFGLEQMLGDLEDDKTKLSAENRTLKLSNSDLKSDIAKLKGIAEEAQFRAEELSCDLEAKKDEVHNILQQLNESRMTLRSEQRSLEEADIKKENLTAKLKTVTEDNGKLMKQARELRDLNDYEFARFRQQEQELTETLRATQDQMADLQEQLTGVEKIRASLKSENESLSASVEELSVASLRNKQDADNSKTMLSEELARFEETVDKLRQEKLEALSMANSRIDALRLEHSEREKMMKSTNARLQADLDEERNEKKRLMNLWNELNEKSLNVDKAVHKSNEEFQSMGSCLQNAKRQIEQLEVACKSKDDIIKFQEEQNKRAANLIKNEKAIRDQASAQFAEKLAILKNSLAEKENETVTLKENFASVVMKHKAELEEKELFLQSRVDLIQRLEHEVADLREKESAEIKKSTWMGERIKIFQQAPMRGSRIRCGSPDSLPDFLADNGPTITEEELRAQLATFPRKSIAPSVDDNEFDKGTPIGFKSNMYDGRESICSLDFFDRSSLQRSSMRSESIQLASPSSAGEFKQPFTPSGVTKERVGVLTARNEKVKPHLKCSYASEVGSTNSPSADEENIKKSKKKNRRDSIFSAFSSKKQ.

The disordered stretch occupies residues 161-199; it reads EASSGFRTPKRNNYSLTSLQTPTATARRLRTASSTARRS. Over residues 162–180 the composition is skewed to polar residues; it reads ASSGFRTPKRNNYSLTSLQ. Residues 181–199 show a composition bias toward low complexity; that stretch reads TPTATARRLRTASSTARRS. A coiled-coil region spans residues 211-634; the sequence is KFMRSERELK…REKESAEIKK (424 aa). 2 disordered regions span residues 736–758 and 779–821; these read RSESIQLASPSSAGEFKQPFTPS and LKCS…SKKQ.

Interacts with gpr-1; gpr-1 forms a complex with gpr-2 and GDP-bound goa-1.

It is found in the cytoplasm. Its subcellular location is the cell cortex. The protein resides in the cytoskeleton. The protein localises to the spindle. It localises to the chromosome. It is found in the centromere. Its subcellular location is the kinetochore. The protein resides in the microtubule organizing center. The protein localises to the centrosome. In terms of biological role, essential component of the spindle apparatus required for spindle positioning and chromosome movement. Acts to recruit or anchor gpr-1/gpr-2 complex to the spindle and cortex. Also involved, directly or indirectly, in cytokinesis and in the coupling of DNA replication, centrosome duplication and mitotic division. This Caenorhabditis elegans protein is Spindle apparatus protein lin-5 (lin-5).